The following is a 434-amino-acid chain: Histidinol dehydrogenase (434 aa).

Tyr-130, Gln-188, and Asn-211 together coordinate NAD(+). Positions 237, 259, and 262 each coordinate substrate. Zn(2+)-binding residues include Gln-259 and His-262. Active-site proton acceptor residues include Glu-326 and His-327. Substrate contacts are provided by His-327, Asp-360, Glu-414, and His-419. A Zn(2+)-binding site is contributed by Asp-360. His-419 contacts Zn(2+).

This sequence belongs to the histidinol dehydrogenase family. In terms of assembly, homodimer. Zn(2+) serves as cofactor. Requires Mn(2+) as cofactor.

The enzyme catalyses L-histidinol + 2 NAD(+) + H2O = L-histidine + 2 NADH + 3 H(+). It participates in amino-acid biosynthesis; L-histidine biosynthesis; L-histidine from 5-phospho-alpha-D-ribose 1-diphosphate: step 9/9. Activity is lost when the metal is removed through urea denaturation or chelation, and can be regained by addition of metal. In terms of biological role, catalyzes the sequential NAD-dependent oxidations of L-histidinol to L-histidinaldehyde and then to L-histidine. The polypeptide is Histidinol dehydrogenase (hisD) (Salmonella typhimurium (strain LT2 / SGSC1412 / ATCC 700720)).